We begin with the raw amino-acid sequence, 267 residues long: MTRIALGLSYDGSSWQGWQTQPHGQTVQDTLEAALGQFSGTGAPLDTLCAGRTDTGVHAAMQVVHVDTHLNRRAESWVRGVNAFLPSSISIHWAKEVGEDFHARFSARSRTYVYLLWRGRVRPALWAHRAGWCFQPLDVTAMRQAAQALLGEHDFSSFRSSQCQARHPVRHLTRLDIAERGSFLVFTLQANAFLHHMVRNIMGALLQIGQGRESVDWMASLLRARDRRLGAPTFSPDGLYLSAIDYPTLFELPDLDGGSSLLAPFTA.

Asp-54 acts as the Nucleophile in catalysis. Residue Tyr-112 participates in substrate binding.

This sequence belongs to the tRNA pseudouridine synthase TruA family. In terms of assembly, homodimer.

The enzyme catalyses uridine(38/39/40) in tRNA = pseudouridine(38/39/40) in tRNA. In terms of biological role, formation of pseudouridine at positions 38, 39 and 40 in the anticodon stem and loop of transfer RNAs. The protein is tRNA pseudouridine synthase A of Bordetella avium (strain 197N).